Here is a 695-residue protein sequence, read N- to C-terminus: Methionine synthase reductase (695 aa).

The Flavodoxin-like domain occupies 4-147 (FLLLYATQRG…VVEPWINGLW (144 aa)). FMN-binding positions include 10-14 (TQRGQ) and 93-124 (LLGLGDSEYTYFCNGGKVIDKRLQELGAQRFY). Residues 166–245 (TLTMASHASR…ASLNIPSLPP (80 aa)) are hinge. Phosphoserine is present on residues Ser171 and Ser187. The region spanning 269-531 (DPVFHVPVSK…PRTTNSFHLP (263 aa)) is the FAD-binding FR-type domain. An NADP(+)-binding site is contributed by Lys289. Residues 449 to 452 (RPYS) and 485 to 488 (GVCT) each bind FAD. Residues 608-609 (SR), 622-624 (YVQ), and Asp657 each bind NADP(+). An FAD-binding site is contributed by Trp695.

Forms a multiprotein complex with MMACHC, MMADHC and MTR. It depends on FAD as a cofactor. The cofactor is FMN.

Its subcellular location is the cytoplasm. The enzyme catalyses 2 methylcob(III)alamin-[methionine synthase] + 2 S-adenosyl-L-homocysteine + NADP(+) + H(+) = 2 cob(II)alamin-[methionine synthase] + 2 S-adenosyl-L-methionine + NADPH. The catalysed reaction is 2 cob(II)alamin + A + 2 H2O + 2 H(+) = 2 aquacob(III)alamin + AH2. Functionally, key enzyme in methionine and folate homeostasis responsible for the reactivation of methionine synthase (MTR/MS) activity by catalyzing the reductive methylation of MTR-bound cob(II)alamin. Cobalamin (vitamin B12) forms a complex with MTR to serve as an intermediary in methyl transfer reactions that cycles between MTR-bound methylcob(III)alamin and MTR bound-cob(I)alamin forms, and occasional oxidative escape of the cob(I)alamin intermediate during the catalytic cycle leads to the inactive cob(II)alamin species. The processing of cobalamin in the cytosol occurs in a multiprotein complex composed of at least MMACHC, MMADHC, MTRR and MTR which may contribute to shuttle safely and efficiently cobalamin towards MTR in order to produce methionine. Also necessary for the utilization of methyl groups from the folate cycle, thereby affecting transgenerational epigenetic inheritance. Also acts as a molecular chaperone for methionine synthase by stabilizing apoMTR and incorporating methylcob(III)alamin into apoMTR to form the holoenzyme. Also serves as an aquacob(III)alamin reductase by reducing aquacob(III)alamin to cob(II)alamin; this reduction leads to stimulation of the conversion of apoMTR and aquacob(III)alamin to MTR holoenzyme. The chain is Methionine synthase reductase (MTRR) from Bos taurus (Bovine).